Reading from the N-terminus, the 158-residue chain is Copper transporter 2 (158 aa).

Residues 1 to 20 form a disordered region; sequence MDHDHMHDMPPPSPSSSSMS. 2 consecutive transmembrane segments (helical) span residues 53–73 and 104–124; these read GMYA…EWLA and YLVM…AIAG.

The protein belongs to the copper transporter (Ctr) (TC 1.A.56) family. SLC31A subfamily. Highly expressed in leaves and at lower levels in roots, stems and flowers.

The protein localises to the membrane. Involved in the transport of copper. This chain is Copper transporter 2 (COPT2), found in Arabidopsis thaliana (Mouse-ear cress).